The primary structure comprises 127 residues: Large ribosomal subunit protein eL32 (127 aa).

The span at 37–48 (KWRKPKGTDSKM) shows a compositional bias: basic and acidic residues. A disordered region spans residues 37 to 65 (KWRKPKGTDSKMRVKLKGKARSPSIGWSS).

It belongs to the eukaryotic ribosomal protein eL32 family.

The protein is Large ribosomal subunit protein eL32 of Thermococcus sibiricus (strain DSM 12597 / MM 739).